A 228-amino-acid chain; its full sequence is Type II methyltransferase M.HhaII (228 aa).

It belongs to the N(4)/N(6)-methyltransferase family.

It carries out the reaction a 2'-deoxyadenosine in DNA + S-adenosyl-L-methionine = an N(6)-methyl-2'-deoxyadenosine in DNA + S-adenosyl-L-homocysteine + H(+). Its function is as follows. A beta subtype methylase, recognizes the double-stranded sequence 5'-GANTC-3', methylates A-2 on both strands, and protects the DNA from cleavage by the HhaII endonuclease. The sequence is that of Type II methyltransferase M.HhaII from Haemophilus parahaemolyticus.